Here is a 217-residue protein sequence, read N- to C-terminus: Variable small protein 22 (217 aa).

The first 18 residues, 1–18, serve as a signal peptide directing secretion; it reads MRKRISAIIMTLFMVFMS. Cysteine 19 carries the N-palmitoyl cysteine lipid modification. The S-diacylglycerol cysteine moiety is linked to residue cysteine 19. Positions 151 to 174 are disordered; sequence LGKNDASDDDTKKAIKKDNSDKTK. The span at 155-174 shows a compositional bias: basic and acidic residues; sequence DASDDDTKKAIKKDNSDKTK.

Belongs to the variable small protein (Vsp) family.

The protein localises to the cell outer membrane. Its function is as follows. The Vlp and Vsp proteins are antigenically distinct proteins, only one vlp or vsp gene is transcriptionally active at any one time. Switching between these genes is a mechanism of host immune response evasion. This Borrelia hermsii protein is Variable small protein 22.